Consider the following 208-residue polypeptide: MSGNLRTRRTVRHSRALGIALTPKAEKYMERRPYGPGQHGRARRKQDSDYAVRLKEKQRLRAQYNIREAQMRRYFEEAKRTAGLTGENLVELLEQRLDALVLRAGFARTIQQARQLVVHRHIMVDGKRVDVPSFRVKEGQMIHVHERSEKMVPFQLAAAGAHQQVLPATPGYLTVEIEKLRATLTRRPKRSEVPVTCEEQLVVEYYAR.

Residues 29–48 form a disordered region; that stretch reads MERRPYGPGQHGRARRKQDS. An S4 RNA-binding domain is found at 95-155; sequence QRLDALVLRA…ERSEKMVPFQ (61 aa).

It belongs to the universal ribosomal protein uS4 family. As to quaternary structure, part of the 30S ribosomal subunit. Contacts protein S5. The interaction surface between S4 and S5 is involved in control of translational fidelity.

Functionally, one of the primary rRNA binding proteins, it binds directly to 16S rRNA where it nucleates assembly of the body of the 30S subunit. Its function is as follows. With S5 and S12 plays an important role in translational accuracy. The sequence is that of Small ribosomal subunit protein uS4 from Micrococcus luteus (strain ATCC 4698 / DSM 20030 / JCM 1464 / CCM 169 / CCUG 5858 / IAM 1056 / NBRC 3333 / NCIMB 9278 / NCTC 2665 / VKM Ac-2230) (Micrococcus lysodeikticus).